The chain runs to 345 residues: Phosphoribosylformylglycinamidine cyclo-ligase (345 aa).

It belongs to the AIR synthase family.

It is found in the cytoplasm. The enzyme catalyses 2-formamido-N(1)-(5-O-phospho-beta-D-ribosyl)acetamidine + ATP = 5-amino-1-(5-phospho-beta-D-ribosyl)imidazole + ADP + phosphate + H(+). The protein operates within purine metabolism; IMP biosynthesis via de novo pathway; 5-amino-1-(5-phospho-D-ribosyl)imidazole from N(2)-formyl-N(1)-(5-phospho-D-ribosyl)glycinamide: step 2/2. The protein is Phosphoribosylformylglycinamidine cyclo-ligase of Shewanella sp. (strain ANA-3).